Here is a 347-residue protein sequence, read N- to C-terminus: N-acetyl-gamma-glutamyl-phosphate reductase (347 aa).

C151 is a catalytic residue.

The protein belongs to the NAGSA dehydrogenase family. Type 1 subfamily.

The protein localises to the cytoplasm. The enzyme catalyses N-acetyl-L-glutamate 5-semialdehyde + phosphate + NADP(+) = N-acetyl-L-glutamyl 5-phosphate + NADPH + H(+). The protein operates within amino-acid biosynthesis; L-arginine biosynthesis; N(2)-acetyl-L-ornithine from L-glutamate: step 3/4. Functionally, catalyzes the NADPH-dependent reduction of N-acetyl-5-glutamyl phosphate to yield N-acetyl-L-glutamate 5-semialdehyde. The chain is N-acetyl-gamma-glutamyl-phosphate reductase from Corynebacterium aurimucosum (strain ATCC 700975 / DSM 44827 / CIP 107346 / CN-1) (Corynebacterium nigricans).